The sequence spans 131 residues: Large ribosomal subunit protein bL12 (131 aa).

A compositionally biased stretch (basic and acidic residues) spans 99-125; it reads ESTPKPIKEGTNKDDAEETKKKLEEAG. The tract at residues 99–131 is disordered; the sequence is ESTPKPIKEGTNKDDAEETKKKLEEAGAKVTVK.

Belongs to the bacterial ribosomal protein bL12 family. As to quaternary structure, homodimer. Part of the ribosomal stalk of the 50S ribosomal subunit. Forms a multimeric L10(L12)X complex, where L10 forms an elongated spine to which 2 to 4 L12 dimers bind in a sequential fashion. Binds GTP-bound translation factors.

Forms part of the ribosomal stalk which helps the ribosome interact with GTP-bound translation factors. Is thus essential for accurate translation. The protein is Large ribosomal subunit protein bL12 of Gloeothece citriformis (strain PCC 7424) (Cyanothece sp. (strain PCC 7424)).